We begin with the raw amino-acid sequence, 411 residues long: Multifunctional CCA protein (411 aa).

The ATP site is built by Gly8 and Arg11. Residues Gly8 and Arg11 each coordinate CTP. Mg(2+) is bound by residues Asp21 and Asp23. ATP contacts are provided by Arg91, Arg137, and Arg140. Residues Arg91, Arg137, and Arg140 each contribute to the CTP site. Residues 226 to 327 (TGVHVMLVID…LRFLQETDAL (102 aa)) form the HD domain.

It belongs to the tRNA nucleotidyltransferase/poly(A) polymerase family. Bacterial CCA-adding enzyme type 1 subfamily. Monomer. Can also form homodimers and oligomers. Mg(2+) serves as cofactor. Ni(2+) is required as a cofactor.

The enzyme catalyses a tRNA precursor + 2 CTP + ATP = a tRNA with a 3' CCA end + 3 diphosphate. The catalysed reaction is a tRNA with a 3' CCA end + 2 CTP + ATP = a tRNA with a 3' CCACCA end + 3 diphosphate. In terms of biological role, catalyzes the addition and repair of the essential 3'-terminal CCA sequence in tRNAs without using a nucleic acid template. Adds these three nucleotides in the order of C, C, and A to the tRNA nucleotide-73, using CTP and ATP as substrates and producing inorganic pyrophosphate. tRNA 3'-terminal CCA addition is required both for tRNA processing and repair. Also involved in tRNA surveillance by mediating tandem CCA addition to generate a CCACCA at the 3' terminus of unstable tRNAs. While stable tRNAs receive only 3'-terminal CCA, unstable tRNAs are marked with CCACCA and rapidly degraded. The protein is Multifunctional CCA protein of Methylobacillus flagellatus (strain ATCC 51484 / DSM 6875 / VKM B-1610 / KT).